The primary structure comprises 496 residues: ATP synthase subunit beta, chloroplastic (496 aa).

Gly-170–Thr-177 is an ATP binding site.

The protein belongs to the ATPase alpha/beta chains family. In terms of assembly, F-type ATPases have 2 components, CF(1) - the catalytic core - and CF(0) - the membrane proton channel. CF(1) has five subunits: alpha(3), beta(3), gamma(1), delta(1), epsilon(1). CF(0) has four main subunits: a(1), b(1), b'(1) and c(9-12).

It localises to the plastid. Its subcellular location is the chloroplast thylakoid membrane. The enzyme catalyses ATP + H2O + 4 H(+)(in) = ADP + phosphate + 5 H(+)(out). In terms of biological role, produces ATP from ADP in the presence of a proton gradient across the membrane. The catalytic sites are hosted primarily by the beta subunits. This chain is ATP synthase subunit beta, chloroplastic, found in Trachycarpus fortunei (Chinese windmill palm).